Consider the following 431-residue polypeptide: Adenylosuccinate synthetase (431 aa).

Residues 12 to 18 (GDEGKGK) and 40 to 42 (GHT) each bind GTP. Catalysis depends on Asp13, which acts as the Proton acceptor. Asp13 and Gly40 together coordinate Mg(2+). IMP contacts are provided by residues 13-16 (DEGK), 38-41 (NAGH), Thr130, Arg144, Gln225, Thr240, and Arg304. Catalysis depends on His41, which acts as the Proton donor. Residue 300 to 306 (STTGRPR) coordinates substrate. Residues Arg306, 332–334 (KMD), and 414–416 (SIG) contribute to the GTP site.

The protein belongs to the adenylosuccinate synthetase family. In terms of assembly, homodimer. Mg(2+) is required as a cofactor.

It localises to the cytoplasm. It catalyses the reaction IMP + L-aspartate + GTP = N(6)-(1,2-dicarboxyethyl)-AMP + GDP + phosphate + 2 H(+). It functions in the pathway purine metabolism; AMP biosynthesis via de novo pathway; AMP from IMP: step 1/2. Its function is as follows. Plays an important role in the de novo pathway of purine nucleotide biosynthesis. Catalyzes the first committed step in the biosynthesis of AMP from IMP. The polypeptide is Adenylosuccinate synthetase (Syntrophotalea carbinolica (strain DSM 2380 / NBRC 103641 / GraBd1) (Pelobacter carbinolicus)).